We begin with the raw amino-acid sequence, 210 residues long: Redox-sensing transcriptional repressor Rex (210 aa).

The H-T-H motif DNA-binding region spans 17–56; it reads SYLHLVKKAEADKLEYISGTVIAEELELEPIQVRKDLTIT. 91–96 is a binding site for NAD(+); sequence GAGSLG.

Belongs to the transcriptional regulatory Rex family. In terms of assembly, homodimer.

The protein resides in the cytoplasm. In terms of biological role, modulates transcription in response to changes in cellular NADH/NAD(+) redox state. The polypeptide is Redox-sensing transcriptional repressor Rex (Treponema denticola (strain ATCC 35405 / DSM 14222 / CIP 103919 / JCM 8153 / KCTC 15104)).